Reading from the N-terminus, the 479-residue chain is Cardiolipin synthase A (479 aa).

A run of 2 helical transmembrane segments spans residues 8-28 and 38-58; these read LLAYFIATLHFLGTLAAIHAV and IAWALSLMFMPYLTLIPYLIF. PLD phosphodiesterase domains lie at 218-245 and 392-419; these read VNFRNHRKIVVVDGITGFVGGHNVGDEY and TPGFLHQKVVLVDSEISAIGSANMDNRS. Active-site residues include H223, K225, D230, H397, K399, and D404.

Belongs to the phospholipase D family. Cardiolipin synthase subfamily. ClsA sub-subfamily.

The protein localises to the cell inner membrane. The enzyme catalyses 2 a 1,2-diacyl-sn-glycero-3-phospho-(1'-sn-glycerol) = a cardiolipin + glycerol. In terms of biological role, catalyzes the reversible phosphatidyl group transfer from one phosphatidylglycerol molecule to another to form cardiolipin (CL) (diphosphatidylglycerol) and glycerol. The sequence is that of Cardiolipin synthase A from Pseudomonas fluorescens (strain SBW25).